Reading from the N-terminus, the 423-residue chain is AP-1 complex subunit mu-2 (423 aa).

The MHD domain occupies 168–421; that stretch reads KNEVFIDVIE…ITQSGDYQLR (254 aa).

Belongs to the adaptor complexes medium subunit family. In terms of assembly, adaptor protein complex 1 (AP-1) is a heterotetramer composed of two large adaptins (gamma-type subunit AP1G1 and beta-type subunit AP1B1), a medium adaptin (mu-type subunit AP1M1 or AP1M2) and a small adaptin (sigma-type subunit AP1S1 or AP1S2 or AP1S3). Interacts with P2X4. Phosphorylation of membrane-bound AP1M1/AP1M2 increases its affinity for sorting signals.

It localises to the golgi apparatus. The protein localises to the cytoplasmic vesicle. Its subcellular location is the clathrin-coated vesicle membrane. Functionally, subunit of clathrin-associated adaptor protein complex 1 that plays a role in protein sorting in the trans-Golgi network (TGN) and endosomes. The AP complexes mediate the recruitment of clathrin to membranes and the recognition of sorting signals within the cytosolic tails of transmembrane cargo molecules. The chain is AP-1 complex subunit mu-2 (Ap1m2) from Rattus norvegicus (Rat).